The following is a 431-amino-acid chain: Putative helicase 055L (431 aa).

Residues 73–222 (WGHVTSKGYC…ALGAFFGRED (150 aa)) form the Helicase ATP-binding domain. 86–93 (CPPGFGKT) contacts ATP. The short motif at 175–178 (DEAH) is the DEAH box element. The segment at 403 to 431 (KCDASRPSQSTPTPTGSSQPAPRTRRPQR) is disordered. The span at 407-424 (SRPSQSTPTPTGSSQPAP) shows a compositional bias: low complexity.

This chain is Putative helicase 055L, found in Frog virus 3 (isolate Goorha) (FV-3).